The chain runs to 158 residues: Vasotocin-neurophysin VT 2 (158 aa).

An N-terminal signal peptide occupies residues 1 to 19; that stretch reads MPHSTLLLCVIGLLAFSSA. A disulfide bond links cysteine 20 and cysteine 25. At glycine 28 the chain carries Glycine amide. Intrachain disulfides connect cysteine 41/cysteine 85, cysteine 44/cysteine 58, cysteine 52/cysteine 75, cysteine 59/cysteine 65, cysteine 92/cysteine 105, cysteine 99/cysteine 117, and cysteine 106/cysteine 111.

The protein belongs to the vasopressin/oxytocin family. Seven disulfide bonds are present in neurophysin.

It is found in the secreted. Vasotocin is an antidiuretic hormone. The chain is Vasotocin-neurophysin VT 2 from Oncorhynchus keta (Chum salmon).